A 562-amino-acid polypeptide reads, in one-letter code: NAD-dependent malic enzyme (562 aa).

Tyr101 functions as the Proton donor in the catalytic mechanism. Arg154 lines the NAD(+) pocket. Lys172 (proton acceptor) is an active-site residue. Glu243, Asp244, and Asp267 together coordinate a divalent metal cation. Residues Asp267 and Asn415 each coordinate NAD(+).

The protein belongs to the malic enzymes family. Homotetramer. Mg(2+) is required as a cofactor. Requires Mn(2+) as cofactor.

It carries out the reaction (S)-malate + NAD(+) = pyruvate + CO2 + NADH. The enzyme catalyses oxaloacetate + H(+) = pyruvate + CO2. The sequence is that of NAD-dependent malic enzyme from Vibrio parahaemolyticus serotype O3:K6 (strain RIMD 2210633).